Here is a 245-residue protein sequence, read N- to C-terminus: NAD(P)H-hydrate epimerase (245 aa).

Residues 16 to 224 (AAALDAELMA…HIADKYDLEV (209 aa)) form the YjeF N-terminal domain. 68–72 (NNGGD) lines the (6S)-NADPHX pocket. Residues asparagine 69 and aspartate 131 each coordinate K(+). (6S)-NADPHX contacts are provided by residues 135–141 (GFSFKPP) and aspartate 164. Residue serine 167 participates in K(+) binding.

This sequence belongs to the NnrE/AIBP family. K(+) is required as a cofactor.

The protein resides in the cytoplasm. The protein localises to the mitochondrion. It catalyses the reaction (6R)-NADHX = (6S)-NADHX. The enzyme catalyses (6R)-NADPHX = (6S)-NADPHX. Its function is as follows. Catalyzes the epimerization of the S- and R-forms of NAD(P)HX, a damaged form of NAD(P)H that is a result of enzymatic or heat-dependent hydration. This is a prerequisite for the S-specific NAD(P)H-hydrate dehydratase to allow the repair of both epimers of NAD(P)HX. This Yarrowia lipolytica (strain CLIB 122 / E 150) (Yeast) protein is NAD(P)H-hydrate epimerase.